The primary structure comprises 146 residues: Hemoglobin cathodic subunit beta (146 aa).

The Globin domain maps to 2 to 146 (HFSDAERDAI…VAAALSSRYF (145 aa)). 2 residues coordinate heme b: H63 and H92.

The protein belongs to the globin family. In terms of assembly, heterotetramer of two alpha chains and two beta chains. Red blood cells.

Its function is as follows. Involved in oxygen transport from gills to the various peripheral tissues. The protein is Hemoglobin cathodic subunit beta (hbb) of Hoplosternum littorale (Hassar).